The sequence spans 246 residues: Sortase B (246 aa).

Residues 5-24 traverse the membrane as a helical segment; the sequence is SFLGKSLTLVVLGVFLFSGW.

The protein belongs to the bacterial sortase family. Class B subfamily.

The protein resides in the cell membrane. Its function is as follows. Transpeptidase that anchors surface proteins to the cell wall. Recognizes and modifies its substrate by proteolytic cleavage of a C-terminal sorting signal. Following cleavage, a covalent intermediate is formed via a thioester bond between the sortase and its substrate, which is then transferred and covalently attached to the cell wall. Catalyzes a cell wall sorting reaction in which a surface protein with the consensus sorting signal NP(Q/K)(T/S)(N/G/S)(D/A) is cleaved between the fourth and fifth residues, and the fourth position is linked to the cell wall. This is not the major sortase in Listeria, it seems to anchor only 2 proteins, Hbp2 (SvpA) and Hbp1. The chain is Sortase B from Listeria monocytogenes serovar 1/2a (strain ATCC BAA-679 / EGD-e).